Reading from the N-terminus, the 152-residue chain is MTITDLVLILFIAALLAYALYDQFIMPRRNGPTLLSIALLRRGRVDSVIFVGLVAILIYNNVTSHGAQMTTWLLSALALMGFYIFWIRTPRIIFKQRGFFFANVWIEYNRIKEMNLSEDGVLVMQLEQRRLLIRVRNIDDLEKIYKLLIENQ.

3 helical membrane-spanning segments follow: residues 6–26 (LVLI…QFIM), 45–65 (VDSV…VTSH), and 67–87 (AQMT…IFWI).

Belongs to the UPF0266 family.

It localises to the cell inner membrane. The chain is UPF0266 membrane protein YobD from Salmonella choleraesuis (strain SC-B67).